Here is a 116-residue protein sequence, read N- to C-terminus: Somatostatin (116 aa).

The N-terminal stretch at 1–24 is a signal peptide; sequence MLSCRLQCALAALSIVLALGGVTG. Positions 25-88 are excised as a propeptide; sequence APSDPRLRQF…QDEMRLELQR (64 aa). Ala-43 carries the post-translational modification Alanine amide. Cys-105 and Cys-116 form a disulfide bridge.

This sequence belongs to the somatostatin family. In terms of processing, C-terminal amidation of the neuronostatin peptide is required for its biological activity, including for the regulation of mean arterial pressure.

It localises to the secreted. Functionally, inhibits the secretion of pituitary hormones, including that of growth hormone/somatotropin (GH1), PRL, ACTH, luteinizing hormone (LH) and TSH. Also impairs ghrelin- and GnRH-stimulated secretion of GH1 and LH; the inhibition of ghrelin-stimulated secretion of GH1 can be further increased by neuronostatin. In terms of biological role, may enhance low-glucose-induced glucagon release by pancreatic alpha cells. This effect may be mediated by binding to GPR107 and PKA activation. May regulate cardiac contractile function. May compromise cardiomyocyte viability. In the central nervous system, may impair memory retention and may affect hippocampal excitability. May also have anxiolytic and anorexigenic effects. May play a role in arterial pressure regulation. May inhibit basal, but not ghrelin- or GnRH-stimulated secretion of GH1 or LH, but does not affect the release of other pituitary hormones, including PRL, ACTH, FSH or TSH. Potentiates inhibitory action of somatostatin on ghrelin-stimulated secretion of GH1, but not that on GnRH-stimulated secretion of LH. The chain is Somatostatin (SST) from Bos taurus (Bovine).